The chain runs to 146 residues: 3-dehydroquinate dehydratase (146 aa).

Residue Tyr-23 is the Proton acceptor of the active site. Substrate is bound by residues Asn-74, His-80, and Asp-87. Residue His-100 is the Proton donor of the active site. Substrate contacts are provided by residues 101 to 102 (IS) and Arg-111.

It belongs to the type-II 3-dehydroquinase family. Homododecamer.

The enzyme catalyses 3-dehydroquinate = 3-dehydroshikimate + H2O. It participates in metabolic intermediate biosynthesis; chorismate biosynthesis; chorismate from D-erythrose 4-phosphate and phosphoenolpyruvate: step 3/7. Catalyzes a trans-dehydration via an enolate intermediate. This chain is 3-dehydroquinate dehydratase, found in Bacillus cereus (strain B4264).